Here is a 222-residue protein sequence, read N- to C-terminus: Protein MKS1 (222 aa).

Residues 1 to 61 are disordered; it reads MDPSEYFAGG…PNRDQPPPYI (61 aa). The segment covering 12 to 21 has biased composition (polar residues); that stretch reads PSDQQNQKRQ. Ser-30 bears the Phosphoserine mark. The span at 37–46 shows a compositional bias: basic residues; sequence DSHKIKKPPK. Pro residues predominate over residues 47-61; that stretch reads HPAPPPNRDQPPPYI. At Ser-72 the chain carries Phosphoserine. A VQ motif is present at residues 83 to 92; the sequence is FMNVVQRLTG. The disordered stretch occupies residues 105-130; the sequence is GDVSPAARLASTENASPRGGKEPAAR. Ser-108 and Ser-120 each carry phosphoserine.

In terms of assembly, interacts with MPK4, WRKY25 and WRKY33. Post-translationally, phosphorylated on serine residue by MPK4.

The protein localises to the nucleus. In terms of biological role, regulator of plant defense response. May contribute to MPK4-regulated defense activation by coupling the kinase to specific WRKY transcription factors. The chain is Protein MKS1 (MKS1) from Arabidopsis thaliana (Mouse-ear cress).